The sequence spans 646 residues: Acetyl-coenzyme A synthetase (646 aa).

CoA-binding positions include 190–193 (RAGK) and Thr-309. ATP is bound by residues 385-387 (GEP), 409-414 (DTWWQT), Asp-498, and Arg-513. Ser-521 is a binding site for CoA. ATP is bound at residue Arg-524. Mg(2+) is bound by residues Val-535, His-537, and Val-540. Arg-582 contacts CoA. Lys-607 is modified (N6-acetyllysine).

It belongs to the ATP-dependent AMP-binding enzyme family. It depends on Mg(2+) as a cofactor. Acetylated. Deacetylation by the SIR2-homolog deacetylase activates the enzyme.

It catalyses the reaction acetate + ATP + CoA = acetyl-CoA + AMP + diphosphate. Catalyzes the conversion of acetate into acetyl-CoA (AcCoA), an essential intermediate at the junction of anabolic and catabolic pathways. AcsA undergoes a two-step reaction. In the first half reaction, AcsA combines acetate with ATP to form acetyl-adenylate (AcAMP) intermediate. In the second half reaction, it can then transfer the acetyl group from AcAMP to the sulfhydryl group of CoA, forming the product AcCoA. The polypeptide is Acetyl-coenzyme A synthetase (Pseudoalteromonas atlantica (strain T6c / ATCC BAA-1087)).